Here is a 1351-residue protein sequence, read N- to C-terminus: MSSETGLGTRLRATSGMGDGIEGAQMLGQHQPALPQPQATVMNNPDPPEITRPNQPKRQTNQLQYLLKAVLKTLWKHQFAWPFQLPVDVVKLNLPDYHKIIKTPMDMGTIKKRLENHYYWNAQECIQDFNTMFTNCYIYNKPGDDIVLMAEALEKLFLQKISEMPQEETELTVVQSKGRGRGRKEQDASITPMRTRVLSGSLEDKSTVKPPVTPVSKPSTPTPPTVTRAPTPPQTRPQQGRPPAIAQAPIRFSPTISQDVVVPTTVAPTLVPPPLSNHPAVIHTAAQPAKTKKGVKRKADTTTPTTHDPLHESSPLPSDPKPPRAVPRKENGRQIRPTKKTEVPDSQLPAPPVLHPQPAPNAERDTKTSEQLRYCASIIREMFSKKHQAYAWPFYKPVDVEALGLHDYCEIIKHPMDLGTIKVKMENRDYKEAQEFASDVRLMFSNCYKYNPPDHEVVIMARKLQDVFEMRFAKMPDEPEEAPAPVPSLAPGPPAPSIKGPPPTSSDSSSDSTSDSESSSDSEEERAQRLAELQEQLKAVHEQLAALSQPQPNKPKKKEREKRKEKHKRKEEVEEPRKGRIREPPAKKPKKSVQGSGGTPSIKKEAPPPAPRPARPAPPSAPCESSEEETQRCRPMSYEEKRQLSLDINKLPGEKLGRVVHIIQSREPSLKNSNPDEIEIDFETLKPSTLRELERYVTSCLRKKRKSQDKIEAPTSGTVKVKGYSSSESESSSESSTSDSEESDSETAPNQKKKGHSGRESRKHHHPMQQPLAAQLPVMKPPSPTIAPSYPLPSSLDSSHISLHHPLHPANVFDAVMQLPPDLPPHLTGQTEHCSPPHLNQHALTSPPALHNAMPQQPSRPSNRAAALPTKPAMPPSASPPPPAPQPPQQPHVHHHHHHHAQPPHVLLEDDEPPSPLTGLPPYLQPLQKSQQPPTQSPIHSLLTSVKVQSQTPMAAPPQSMRHLQPLVYPPPPSTATTAPPPASSHIHQLQSSPVVPQQLPAGQAPPPPQQQQQHPALQGTLVSSHQQHVQHQHAKQQQVIQHHHHHPSPRQQKQETYPGGHLRDAPSPLLLHSPPVPPYPGLTHPPSPQSVQPKKQEIRGASVLQPQPVVMKEDKRHSPSIRPEGFSPGMRPEPQKVPEVLKGPSHIQPRPDLKKMDGGRPIRLPDQSLPPQGMPEKEKQKQEPKTPVAPKKDIKIKNMGSWAGLMQKPPVTPTSAGKSTSDSFELFRRQAREKEERERALKLQAEQAERVRREQDRMSRTREDDEVQDQARKAHEEARRRQEQQQQQQHVQSNLPTAPSPAQSSQPMMDQREMARKREQERRRRQAMAPSIDMNFQSELMEIFEQNLFS.

7 disordered regions span residues 1–23, 35–58, 168–244, 285–368, 478–638, 700–799, and 821–1334; these read MSSE…GIEG, PQPQ…QPKR, ETEL…RPPA, AAQP…DTKT, EPEE…PMSY, CLRK…LDSS, and PDLP…PSID. Residues 58-164 enclose the Bromo 1 domain; that stretch reads RQTNQLQYLL…KLFLQKISEM (107 aa). Residues 208–219 are compositionally biased toward low complexity; the sequence is VKPPVTPVSKPS. Positions 220–235 are enriched in pro residues; it reads TPTPPTVTRAPTPPQT. The segment covering 327–343 has biased composition (basic and acidic residues); the sequence is PRKENGRQIRPTKKTEV. Pro residues predominate over residues 349-359; the sequence is PAPPVLHPQPA. Positions 366–475 constitute a Bromo 2 domain; sequence TKTSEQLRYC…DVFEMRFAKM (110 aa). Over residues 482-504 the composition is skewed to pro residues; sequence APAPVPSLAPGPPAPSIKGPPPT. The NPS region stretch occupies residues 504-522; sequence TSSDSSSDSTSDSESSSDS. A compositionally biased stretch (low complexity) spans 505–517; it reads SSDSSSDSTSDSE. A BID region region spans residues 543 to 598; sequence QLAALSQPQPNKPKKKEREKRKEKHKRKEEVEEPRKGRIREPPAKKPKKSVQGSGG. The span at 554-569 shows a compositional bias: basic residues; sequence KPKKKEREKRKEKHKR. Positions 570 to 586 are enriched in basic and acidic residues; the sequence is KEEVEEPRKGRIREPPA. Residues 607–621 show a composition bias toward pro residues; that stretch reads PPPAPRPARPAPPSA. Residues 624 to 708 form the NET domain; the sequence is ESSEEETQRC…SCLRKKRKSQ (85 aa). Basic and acidic residues predominate over residues 629-638; sequence ETQRCRPMSY. Over residues 725–738 the composition is skewed to low complexity; it reads SSSESESSSESSTS. The span at 751 to 767 shows a compositional bias: basic residues; sequence QKKKGHSGRESRKHHHP. Positions 788 to 799 are enriched in low complexity; sequence PSYPLPSSLDSS. Residues 872–890 are compositionally biased toward pro residues; that stretch reads PAMPPSASPPPPAPQPPQQ. The span at 892-902 shows a compositional bias: basic residues; it reads HVHHHHHHHAQ. The segment covering 927–953 has biased composition (polar residues); sequence LQKSQQPPTQSPIHSLLTSVKVQSQTP. Positions 968–983 are enriched in pro residues; sequence VYPPPPSTATTAPPPA. 2 stretches are compositionally biased toward low complexity: residues 994-1003 and 1011-1028; these read PVVPQQLPAG and QQQQ…SHQQ. Residues 1051–1350 form a C-terminal (CTD) region region; that stretch reads RQQKQETYPG…LMEIFEQNLF (300 aa). Residues 1075-1089 are compositionally biased toward pro residues; that stretch reads PPVPPYPGLTHPPSP. Composition is skewed to basic and acidic residues over residues 1150-1161 and 1176-1197; these read PRPDLKKMDGGR and PEKE…DIKI. Over residues 1214–1224 the composition is skewed to polar residues; the sequence is PTSAGKSTSDS. The span at 1226 to 1284 shows a compositional bias: basic and acidic residues; sequence ELFRRQAREKEERERALKLQAEQAERVRREQDRMSRTREDDEVQDQARKAHEEARRRQE. Residues 1301 to 1310 are compositionally biased toward low complexity; the sequence is SPAQSSQPMM. Positions 1311-1323 are enriched in basic and acidic residues; that stretch reads DQREMARKREQER.

This sequence belongs to the BET family.

Its subcellular location is the nucleus. The protein resides in the chromosome. In terms of biological role, chromatin reader protein that recognizes and binds acetylated histones and plays a key role in transmission of epigenetic memory across cell divisions and transcription regulation. Remains associated with acetylated chromatin throughout the entire cell cycle and provides epigenetic memory for postmitotic G1 gene transcription by preserving acetylated chromatin status and maintaining high-order chromatin structure. During interphase, plays a key role in regulating the transcription of signal-inducible genes by associating with the P-TEFb complex and recruiting it to promoters. This chain is Bromodomain-containing protein 4A (brd4-a), found in Xenopus laevis (African clawed frog).